A 604-amino-acid chain; its full sequence is Sulfite reductase [NADPH] flavoprotein alpha-component (604 aa).

Residues 66–204 enclose the Flavodoxin-like domain; sequence VTVLSASQTG…AANAWTDNIA (139 aa). Residues 72–77, 119–122, and 155–164 each bind FMN; these read SQTGNA, STQG, and LGDSSYPNFC. The FAD-binding FR-type domain occupies 239–453; that stretch reads ADPFPAALLA…VERNDGFRLP (215 aa). FAD is bound by residues Thr327, Gln361, 391–394, 409–411, and 424–427; these read RLYS, TVG, and GGAS. Residues 524–525, 530–534, and Asp566 contribute to the NADP(+) site; these read SR and KIYVQ. Tyr604 is a binding site for FAD.

It belongs to the NADPH-dependent sulphite reductase flavoprotein subunit CysJ family. The protein in the N-terminal section; belongs to the flavodoxin family. In the C-terminal section; belongs to the flavoprotein pyridine nucleotide cytochrome reductase family. As to quaternary structure, alpha(8)-beta(8). The alpha component is a flavoprotein, the beta component is a hemoprotein. It depends on FAD as a cofactor. FMN serves as cofactor.

The enzyme catalyses hydrogen sulfide + 3 NADP(+) + 3 H2O = sulfite + 3 NADPH + 4 H(+). It functions in the pathway sulfur metabolism; hydrogen sulfide biosynthesis; hydrogen sulfide from sulfite (NADPH route): step 1/1. Functionally, component of the sulfite reductase complex that catalyzes the 6-electron reduction of sulfite to sulfide. This is one of several activities required for the biosynthesis of L-cysteine from sulfate. The flavoprotein component catalyzes the electron flow from NADPH -&gt; FAD -&gt; FMN to the hemoprotein component. The chain is Sulfite reductase [NADPH] flavoprotein alpha-component from Neisseria meningitidis serogroup C (strain 053442).